The following is a 688-amino-acid chain: Envelope glycoprotein gp70 (688 aa).

A compositionally biased stretch (polar residues) spans 1–15 (MPNHQSGSPTGSSDL). Residues 1-31 (MPNHQSGSPTGSSDLLLSGKKQRPHLALRRK) form a disordered region. An N-terminal signal peptide occupies residues 1-98 (MPNHQSGSPT…SVLGPPPVTG (98 aa)). Basic residues predominate over residues 20-31 (KKQRPHLALRRK). The Extracellular segment spans residues 99–624 (ESYWAYLPKP…ALNPLDWTQY (526 aa)). N-linked (GlcNAc...) asparagine; by host glycans are attached at residues Asn-127 and Asn-143. The stretch at 426–474 (LLPVDIGDEPWFDDSAIQTFRYATDLIRAKRFVAAIILGISALIAIITS) forms a coiled coil. Residues 455 to 456 (KR) constitute a propeptide that is removed on maturation. Residues 457–477 (FVAAIILGISALIAIITSFAV) form a fusion peptide region. The tract at residues 463 to 481 (LGISALIAIITSFAVATTA) is immunosuppression. Asn-498 is a glycosylation site (N-linked (GlcNAc...) asparagine; by host). Positions 511–541 (LKLEARLNALEEVVLELGQDVANLKTRMSTR) form a coiled coil. Residue Asn-557 is glycosylated (N-linked (GlcNAc...) asparagine; by host). Residues 625-645 (FIFIGVGALLLVIVLMIFPIV) form a helical membrane-spanning segment. Residues 646-688 (FQCLAKSLDQVQSDLNVLLLKKKKGGNAAPAAEMVELPRVSYT) lie on the Cytoplasmic side of the membrane.

The mature envelope protein (Env) consists of a trimer of SU-TM heterodimers attached by noncovalent interactions or by a labile interchain disulfide bond. In terms of processing, specific enzymatic cleavages in vivo yield mature proteins. Envelope glycoproteins are synthesized as an inactive precursor that is N-glycosylated and processed likely by host cell furin or by a furin-like protease in the Golgi to yield the mature SU and TM proteins. The cleavage site between SU and TM requires the minimal sequence [KR]-X-[KR]-R.

It is found in the virion membrane. The protein resides in the host cell membrane. In terms of biological role, the surface protein (SU) attaches the virus to the host cell by binding to its receptor. This interaction triggers the refolding of the transmembrane protein (TM) and is thought to activate its fusogenic potential by unmasking its fusion peptide. Fusion occurs at the host cell plasma membrane. Functionally, the transmembrane protein (TM) acts as a class I viral fusion protein. Under the current model, the protein has at least 3 conformational states: pre-fusion native state, pre-hairpin intermediate state, and post-fusion hairpin state. During viral and target cell membrane fusion, the coiled coil regions (heptad repeats) assume a trimer-of-hairpins structure, positioning the fusion peptide in close proximity to the C-terminal region of the ectodomain. The formation of this structure appears to drive apposition and subsequent fusion of viral and target cell membranes. Membranes fusion leads to delivery of the nucleocapsid into the cytoplasm. The polypeptide is Envelope glycoprotein gp70 (env) (Mus musculus (Mouse)).